The following is a 205-amino-acid chain: Protein GrpE (205 aa).

The disordered stretch occupies residues 1–40 (MSRKLHEEELTPEGMDAAQNADPAGDPVSENEGALPAAEP).

Belongs to the GrpE family. Homodimer.

The protein resides in the cytoplasm. In terms of biological role, participates actively in the response to hyperosmotic and heat shock by preventing the aggregation of stress-denatured proteins, in association with DnaK and GrpE. It is the nucleotide exchange factor for DnaK and may function as a thermosensor. Unfolded proteins bind initially to DnaJ; upon interaction with the DnaJ-bound protein, DnaK hydrolyzes its bound ATP, resulting in the formation of a stable complex. GrpE releases ADP from DnaK; ATP binding to DnaK triggers the release of the substrate protein, thus completing the reaction cycle. Several rounds of ATP-dependent interactions between DnaJ, DnaK and GrpE are required for fully efficient folding. The protein is Protein GrpE of Acidobacterium capsulatum (strain ATCC 51196 / DSM 11244 / BCRC 80197 / JCM 7670 / NBRC 15755 / NCIMB 13165 / 161).